Consider the following 446-residue polypeptide: Glucosylglycerate hydrolase (446 aa).

Substrate is bound by residues Tyr-36, Trp-40–Asp-43, Tyr-88, Gln-115, and Gly-180. Catalysis depends on Asp-182, which acts as the Proton donor. Substrate-binding positions include Arg-216 and Tyr-375 to Trp-376. The active-site Proton acceptor is the Glu-419. Residue Gln-434 coordinates substrate.

This sequence belongs to the glycosyl hydrolase 63 family. In terms of assembly, homotetramer. Dimer of dimers.

The enzyme catalyses (2R)-2-O-(alpha-D-glucopyranosyl)-glycerate + H2O = (R)-glycerate + D-glucose. Its activity is regulated as follows. Activity is not dependent on divalent cations, but it is enhanced by Mg(2+). Catalyzes the hydrolysis of glucosylglycerate (GG) to glycerate and glucose. Involved in recovery from nitrogen starvation by promoting the rapid mobilization of the glucosylglycerate that accumulates under these conditions. Can also hydrolyze mannosylglycerate (MG), with tenfold lower efficiency. In Mycolicibacterium hassiacum (strain DSM 44199 / CIP 105218 / JCM 12690 / 3849) (Mycobacterium hassiacum), this protein is Glucosylglycerate hydrolase.